We begin with the raw amino-acid sequence, 756 residues long: Catalase-peroxidase (756 aa).

An N-terminal signal peptide occupies residues 1 to 26; it reads MKGKTVNKQTLAALVSALLVFNPAVA. A cross-link (tryptophyl-tyrosyl-methioninium (Trp-Tyr) (with M-274)) is located at residues 126–248; the sequence is WHSAGTYRTL…LGATHMGLIY (123 aa). H127 (proton acceptor) is an active-site residue. Positions 248-274 form a cross-link, tryptophyl-tyrosyl-methioninium (Tyr-Met) (with W-126); it reads YVNPEGPKGVPDPLGSAKNIRTAFSRM. H289 lines the heme b pocket.

The protein belongs to the peroxidase family. Peroxidase/catalase subfamily. Homodimer or homotetramer. It depends on heme b as a cofactor. In terms of processing, formation of the three residue Trp-Tyr-Met cross-link is important for the catalase, but not the peroxidase activity of the enzyme.

The catalysed reaction is H2O2 + AH2 = A + 2 H2O. It catalyses the reaction 2 H2O2 = O2 + 2 H2O. Functionally, bifunctional enzyme with both catalase and broad-spectrum peroxidase activity. The sequence is that of Catalase-peroxidase from Shewanella loihica (strain ATCC BAA-1088 / PV-4).